The following is a 477-amino-acid chain: Glycogen synthase (477 aa).

K15 serves as a coordination point for ADP-alpha-D-glucose.

This sequence belongs to the glycosyltransferase 1 family. Bacterial/plant glycogen synthase subfamily.

It catalyses the reaction [(1-&gt;4)-alpha-D-glucosyl](n) + ADP-alpha-D-glucose = [(1-&gt;4)-alpha-D-glucosyl](n+1) + ADP + H(+). The protein operates within glycan biosynthesis; glycogen biosynthesis. Its function is as follows. Synthesizes alpha-1,4-glucan chains using ADP-glucose. In Streptococcus pneumoniae serotype 2 (strain D39 / NCTC 7466), this protein is Glycogen synthase.